We begin with the raw amino-acid sequence, 360 residues long: 3-dehydroquinate synthase (360 aa).

NAD(+)-binding positions include 104–108 (GVIGD), 128–129 (TT), K141, and 168–171 (FLDT). E183, H243, and H260 together coordinate Zn(2+).

This sequence belongs to the sugar phosphate cyclases superfamily. Dehydroquinate synthase family. Requires Co(2+) as cofactor. It depends on Zn(2+) as a cofactor. NAD(+) is required as a cofactor.

The protein localises to the cytoplasm. The catalysed reaction is 7-phospho-2-dehydro-3-deoxy-D-arabino-heptonate = 3-dehydroquinate + phosphate. Its pathway is metabolic intermediate biosynthesis; chorismate biosynthesis; chorismate from D-erythrose 4-phosphate and phosphoenolpyruvate: step 2/7. Functionally, catalyzes the conversion of 3-deoxy-D-arabino-heptulosonate 7-phosphate (DAHP) to dehydroquinate (DHQ). This Streptococcus equi subsp. equi (strain 4047) protein is 3-dehydroquinate synthase.